Reading from the N-terminus, the 147-residue chain is Probable disulfide formation protein (147 aa).

A helical membrane pass occupies residues 9–28 (NYSLYFAWLTALIATLGSLY). Cysteines 38 and 41 form a disulfide. The next 2 membrane-spanning stretches (helical) occupy residues 43-62 (YQRV…AYRT) and 69-86 (YALP…YQYL). Cys-99 and Cys-106 form a disulfide bridge. Residues 115 to 138 (GFITLPFLGMLATLIMSFFLIMAF) form a helical membrane-spanning segment.

The protein belongs to the DsbB family. BdbC subfamily.

The protein resides in the cell inner membrane. Required for disulfide bond formation in some proteins. The protein is Probable disulfide formation protein of Coxiella burnetii (strain CbuK_Q154) (Coxiella burnetii (strain Q154)).